The chain runs to 191 residues: UPF0228 protein MM_1428 (191 aa).

The protein belongs to the UPF0228 family.

In Methanosarcina mazei (strain ATCC BAA-159 / DSM 3647 / Goe1 / Go1 / JCM 11833 / OCM 88) (Methanosarcina frisia), this protein is UPF0228 protein MM_1428.